Consider the following 165-residue polypeptide: SsrA-binding protein (165 aa).

This sequence belongs to the SmpB family.

The protein resides in the cytoplasm. Functionally, required for rescue of stalled ribosomes mediated by trans-translation. Binds to transfer-messenger RNA (tmRNA), required for stable association of tmRNA with ribosomes. tmRNA and SmpB together mimic tRNA shape, replacing the anticodon stem-loop with SmpB. tmRNA is encoded by the ssrA gene; the 2 termini fold to resemble tRNA(Ala) and it encodes a 'tag peptide', a short internal open reading frame. During trans-translation Ala-aminoacylated tmRNA acts like a tRNA, entering the A-site of stalled ribosomes, displacing the stalled mRNA. The ribosome then switches to translate the ORF on the tmRNA; the nascent peptide is terminated with the 'tag peptide' encoded by the tmRNA and targeted for degradation. The ribosome is freed to recommence translation, which seems to be the essential function of trans-translation. In Prochlorococcus marinus (strain MIT 9515), this protein is SsrA-binding protein.